The following is a 529-amino-acid chain: Scarecrow-like protein 13 (529 aa).

Residues 51–81 (ASGSLPSYDSPSVSITSGRSPFSPQGSQSCI) show a composition bias toward polar residues. The tract at residues 51–84 (ASGSLPSYDSPSVSITSGRSPFSPQGSQSCISDL) is disordered. The GRAS domain maps to 146-525 (LLALTPQLDL…RPMATCSVWK (380 aa)). Positions 153-213 (LDLKEVLVEA…RARLEGSGSN (61 aa)) are leucine repeat I (LRI). The tract at residues 232 to 297 (MSVLYEICPY…GGPPLLRVTG (66 aa)) is VHIID. Residues 263–267 (VHIID) carry the VHIID motif. The interval 313–345 (LVGERLATLAQSCGVPFEFHDAIMSGCKVQREH) is leucine repeat II (LRII). The interval 354–448 (VVVNFPYVLH…QHCVARDIVN (95 aa)) is PFYRE. The interval 451-525 (ACEESERVER…RPMATCSVWK (75 aa)) is SAW.

It belongs to the GRAS family. Expressed in roots, hypocotyls, cotyledons, shoot apex, leaves, flowers and siliques.

The protein resides in the cytoplasm. It is found in the nucleus. In terms of biological role, probable transcription factor that acts as a positive regulator of continuous red light signals downstream of phytochrome B (phyB). Required for the regulation of hypocotyl elongation during de-etiolation. May be required to modulate phytochrome A (phyA) signal transduction in a phyB-independent way. The polypeptide is Scarecrow-like protein 13 (SCL13) (Arabidopsis thaliana (Mouse-ear cress)).